A 128-amino-acid polypeptide reads, in one-letter code: Holo-[acyl-carrier-protein] synthase (128 aa).

Asp-10 and Glu-59 together coordinate Mg(2+).

Belongs to the P-Pant transferase superfamily. AcpS family. Mg(2+) is required as a cofactor.

The protein localises to the cytoplasm. It catalyses the reaction apo-[ACP] + CoA = holo-[ACP] + adenosine 3',5'-bisphosphate + H(+). Functionally, transfers the 4'-phosphopantetheine moiety from coenzyme A to a Ser of acyl-carrier-protein. The polypeptide is Holo-[acyl-carrier-protein] synthase (Syntrophotalea carbinolica (strain DSM 2380 / NBRC 103641 / GraBd1) (Pelobacter carbinolicus)).